Here is a 227-residue protein sequence, read N- to C-terminus: Tegument protein ORF55 (227 aa).

The S-palmitoyl cysteine; by host moiety is linked to residue cysteine 11. The tract at residues 183-227 (VTRQPEATLPKPPTEDPSVSAMHSSIPPRPSSTLEETTESAIGST) is disordered. A compositionally biased stretch (polar residues) spans 213-227 (SSTLEETTESAIGST).

It belongs to the herpesviridae UL51 family. Oligomerizes. Interacts with ORF42; this interaction mediates ORF42 incorporation to virions. Interacts with vBCL2. Post-translationally, phosphorylated. In terms of processing, palmitoylation is necessary for Golgi localization.

The protein resides in the virion tegument. The protein localises to the host cytoplasm. It localises to the host Golgi apparatus. Functionally, plays several roles during the time course of infection, including egress of virus particles from the perinuclear space and secondary envelopment of cytoplasmic capsids that bud into specific trans-Golgi network (TGN)-derived membranes. This chain is Tegument protein ORF55 (ORF55), found in Homo sapiens (Human).